The chain runs to 299 residues: Taste receptor type 2 member 4 (299 aa).

The Extracellular portion of the chain corresponds to 1–9; that stretch reads MLQLFYFSA. The chain crosses the membrane as a helical span at residues 10 to 30; sequence IIASVILNFVGIIMNLFIMVV. Residues 31-46 are Cytoplasmic-facing; sequence NCKTWVKSHRISSSDR. Residues 47 to 67 form a helical membrane-spanning segment; it reads ILFSLGITRFLMLGLFLVNTI. Residues 68–81 are Extracellular-facing; the sequence is FFVSSNTERSVYLS. The helical transmembrane segment at 82–102 threads the bilayer; sequence AFFVLCFMFXDSSSLWFVTLL. Topologically, residues 103-131 are cytoplasmic; sequence NILYCVKITNFQHSVFLLLKQNISPKIPR. The helical transmembrane segment at 132–152 threads the bilayer; the sequence is LLLACVLISAFTTCLYITLSQ. Residues 153–172 lie on the Extracellular side of the membrane; sequence ASPFPELVTKRNNTSFNTHE. 2 N-linked (GlcNAc...) asparagine glycosylation sites follow: asparagine 164 and asparagine 165. Residues 173–193 form a helical membrane-spanning segment; that stretch reads GILSLVVSLVLSSSLQFIINV. The Cytoplasmic segment spans residues 194–230; sequence TSASLLIHSLRRHIQKMQKNATGFWNPQTEAHVGAMK. A helical membrane pass occupies residues 231 to 251; sequence LMIYFLILYIPYSVATLVQYL. At 252–262 the chain is on the extracellular side; the sequence is PFYVGMDMGTK. Residues 263–283 traverse the membrane as a helical segment; it reads AICLIFATLYSPGHSVLIIIT. The Cytoplasmic portion of the chain corresponds to 284–299; sequence HPKLKTTAKKILCFKK.

Belongs to the G-protein coupled receptor T2R family.

The protein resides in the membrane. It is found in the cell projection. Its subcellular location is the cilium membrane. Its function is as follows. Gustducin-coupled receptor implicated in the perception of bitter compounds in the oral cavity and the gastrointestinal tract. Signals through PLCB2 and the calcium-regulated cation channel TRPM5. In airway epithelial cells, binding of denatonium increases the intracellular calcium ion concentration and stimulates ciliary beat frequency. This is Taste receptor type 2 member 4 (TAS2R4) from Pongo pygmaeus (Bornean orangutan).